The following is a 126-amino-acid chain: Large ribosomal subunit protein bL12 (126 aa).

This sequence belongs to the bacterial ribosomal protein bL12 family. Homodimer. Part of the ribosomal stalk of the 50S ribosomal subunit. Forms a multimeric L10(L12)X complex, where L10 forms an elongated spine to which 2 to 4 L12 dimers bind in a sequential fashion. Binds GTP-bound translation factors.

Forms part of the ribosomal stalk which helps the ribosome interact with GTP-bound translation factors. Is thus essential for accurate translation. This is Large ribosomal subunit protein bL12 from Chlorobium phaeobacteroides (strain BS1).